The chain runs to 464 residues: Tyrosine aminotransferase (464 aa).

N6-(pyridoxal phosphate)lysine is present on Lys-284.

This sequence belongs to the class-I pyridoxal-phosphate-dependent aminotransferase family. Homodimer. Pyridoxal 5'-phosphate serves as cofactor. As to expression, expressed in the muscle. Expressed in the hypodermis and intestine.

It catalyses the reaction L-tyrosine + 2-oxoglutarate = 3-(4-hydroxyphenyl)pyruvate + L-glutamate. The enzyme catalyses 3-hydroxy-L-phenylalanine + 2-oxoglutarate = 3-(3-hydroxyphenyl)pyruvate + L-glutamate. It functions in the pathway amino-acid degradation; L-phenylalanine degradation; acetoacetate and fumarate from L-phenylalanine: step 2/6. Functionally, transaminase involved in tyrosine breakdown. Converts tyrosine to p-hydroxyphenylpyruvate. Has no transaminase activity towards phenylalanine. Plays protective role against oxidative stress, metabolizing meta-tyrosine and negatively regulating its accumulation. Plays a role in modulating the daf-2/insulin receptor-like transduction pathway through regulating tyrosine levels. Negatively regulates dauer formation. Plays a role in longevity. The polypeptide is Tyrosine aminotransferase (Caenorhabditis elegans).